The chain runs to 141 residues: Large ribosomal subunit protein uL11 (141 aa).

This sequence belongs to the universal ribosomal protein uL11 family. Part of the ribosomal stalk of the 50S ribosomal subunit. Interacts with L10 and the large rRNA to form the base of the stalk. L10 forms an elongated spine to which L12 dimers bind in a sequential fashion forming a multimeric L10(L12)X complex. Post-translationally, one or more lysine residues are methylated.

In terms of biological role, forms part of the ribosomal stalk which helps the ribosome interact with GTP-bound translation factors. This chain is Large ribosomal subunit protein uL11, found in Thermosipho africanus (strain TCF52B).